The following is a 426-amino-acid chain: D-tagatose-1,6-bisphosphate aldolase subunit KbaZ (426 aa).

It belongs to the GatZ/KbaZ family. KbaZ subfamily. Forms a complex with KbaY.

It functions in the pathway carbohydrate metabolism; D-tagatose 6-phosphate degradation; D-glyceraldehyde 3-phosphate and glycerone phosphate from D-tagatose 6-phosphate: step 2/2. Component of the tagatose-1,6-bisphosphate aldolase KbaYZ that is required for full activity and stability of the Y subunit. Could have a chaperone-like function for the proper and stable folding of KbaY. When expressed alone, KbaZ does not show any aldolase activity. The chain is D-tagatose-1,6-bisphosphate aldolase subunit KbaZ from Escherichia coli (strain ATCC 8739 / DSM 1576 / NBRC 3972 / NCIMB 8545 / WDCM 00012 / Crooks).